The chain runs to 319 residues: Olfactory receptor 2S2 (319 aa).

At 1-26 (MEKANETSPVMGFVLLRLSAHPELEK) the chain is on the extracellular side. Asn-5 carries an N-linked (GlcNAc...) asparagine glycan. Residues 27 to 50 (TFFVLILLMYLVILLGNGVLILVT) traverse the membrane as a helical segment. The Cytoplasmic portion of the chain corresponds to 51-58 (ILDSRLHT). The helical transmembrane segment at 59 to 80 (PMYFFLGNLSFLDICFTTSSVP) threads the bilayer. The Extracellular portion of the chain corresponds to 81 to 101 (LVLDSFLTPQETISFSACAVQ). Residues Cys-98 and Cys-190 are joined by a disulfide bond. Residues 102–121 (MALSFAMAGTECLLLSMMAF) form a helical membrane-spanning segment. Topologically, residues 122–140 (DRYVAICNPLRYSVIMSKA) are cytoplasmic. The helical transmembrane segment at 141-159 (AYMPMAASSWAIGGAASVV) threads the bilayer. Residues 160-196 (HTSLAIQLPFCGDNVINHFTCEILAVLKLACADISIN) lie on the Extracellular side of the membrane. The helical transmembrane segment at 197-220 (VISMEVTNVIFLGVPVLFISFSYV) threads the bilayer. The Cytoplasmic segment spans residues 221 to 237 (FIITTILRIPSAEGRKK). The helical transmembrane segment at 238-260 (VFSTCSAHLTVVIVFYGTLFFMY) threads the bilayer. The Extracellular segment spans residues 261–279 (GKPKSKDSMGADKEDLSDK). Residues 280–299 (LIPLFYGVVTPMLNPIIYSL) form a helical membrane-spanning segment. The Cytoplasmic segment spans residues 300–319 (RNKDVKAAVRRLLRPKGFTQ).

The protein belongs to the G-protein coupled receptor 1 family.

Its subcellular location is the cell membrane. In terms of biological role, odorant receptor. This Homo sapiens (Human) protein is Olfactory receptor 2S2 (OR2S2).